The chain runs to 576 residues: MAGUK p55 subfamily member 2 (576 aa).

L27 domains are found at residues 8-60 (SETA…FMQQ) and 84-142 (LEAV…YETP). Position 42 is a phosphoserine (S42). T141 carries the phosphothreonine modification. Position 145 is a phosphoserine (S145). One can recognise a PDZ domain in the interval 185-240 (ELVIARILHGGMVAQQGLLHVGDIIKEVNGQPVGSDPRALQELLRNASGSVILKIL). In terms of domain architecture, SH3 spans 249–317 (PRQVFVKCHF…PSQLLEEKRK (69 aa)). Residues 374–561 (RKTLVLIGAQ…TFRELQTAME (188 aa)) form the Guanylate kinase-like domain.

It belongs to the MAGUK family. Can homomultimerise. Interacts with CACNG2. Interacts (via the SH3-Guanylate kinase-like sub-module) with DLG4/PSD95 and DLGAP1/GKAP. Interacts (via the PDZ domain) with CADM1 (via C-terminus). Interacts with KCNN2/SK2 (via N-terminal domain). Interacts with SRC. Phosphorylated by SRC.

The protein localises to the cytoplasm. It localises to the cytoskeleton. It is found in the membrane. Its subcellular location is the cell projection. The protein resides in the dendrite. The protein localises to the postsynaptic density. In terms of biological role, postsynaptic MAGUK scaffold protein that links CADM1 cell adhesion molecules to core components of the postsynaptic density. In CA1 pyramidal neurons, required for synaptic KCNN2-containing channel function and long-term potentiation expression. Seems to negatively regulate SRC function in epithelial cells. The sequence is that of MAGUK p55 subfamily member 2 from Homo sapiens (Human).